We begin with the raw amino-acid sequence, 252 residues long: NAC domain-containing protein 83 (252 aa).

The NAC domain maps to 14-160 (LPPGFRFHPT…NWVLCRIFLK (147 aa)). The DNA-binding element occupies 110–166 (VGLKKTLVFYKGKPPHGSRTDWIMHEYRLSSSPPSSMGPTQNWVLCRIFLKKRAGNK). Disordered regions lie at residues 165–194 (NKND…IITT) and 217–252 (LNLL…NSFR). Low complexity-rich tracts occupy residues 180-194 (NNNN…IITT) and 219-252 (LLPS…NSFR). The PEST-like stretch occupies residues 213-226 (RTTDLNLLPSSPSS).

Interacts with NAC007/VND4, NAC026/VND5 and NAC030/VND7. Interacts with the mungbean yellow mosaic virus (MYMV) AC1 replication-associated protein. As to expression, expressed in xylem and phloem cells in roots and inflorescence stems. Highly expressed in senescent leaves. Expressed in roots, and abscission and dehiscence tissues, such as axils of bracts and abscission zones in cauline leaves and siliques.

The protein localises to the nucleus. Its function is as follows. Transcriptional repressor that negatively regulates the expression of genes involved in xylem vessel formation. Represses the transcriptional activation activity of NAC030/VND7, which regulates protoxylem vessel differentiation by promoting immature xylem vessel-specific genes expression. Transcriptional activator that regulates the COLD-REGULATED (COR15A and COR15B) and RESPONSIVE TO DEHYDRATION (LTI78/RD29A and LTI65/RD29B) genes by binding directly to their promoters. Mediates signaling crosstalk between salt stress response and leaf aging process. May play a role in DNA replication of mungbean yellow mosaic virus. This is NAC domain-containing protein 83 from Arabidopsis thaliana (Mouse-ear cress).